We begin with the raw amino-acid sequence, 1208 residues long: ATP-dependent DNA helicase Q4 (1208 aa).

Disordered stretches follow at residues 17–180 (AFRR…ASLS) and 201–333 (FLGA…AGKA). At S27 the chain carries Phosphoserine. A compositionally biased stretch (basic and acidic residues) spans 36 to 47 (EETRALYREYRT). The segment covering 61–70 (SSESLPAAAE) has biased composition (low complexity). Over residues 86-100 (ATKSPQSTPGRSRQG) the composition is skewed to polar residues. Residues S178 and S180 each carry the phosphoserine modification. Residues 273–283 (AQVQQESSQAG) show a composition bias toward polar residues. The Helicase ATP-binding domain maps to 489 to 662 (VMRILSGIST…AQHLAVAEEP (174 aa)). An ATP-binding site is contributed by 502-509 (LPTGAGKS). The short motif at 605 to 608 (DEAH) is the DEAH box element. In terms of domain architecture, Helicase C-terminal spans 683-850 (DTDQALLTLL…AVKRLVQRVF (168 aa)). Residues C853 and C855 each contribute to the Zn(2+) site. The segment at 860–888 (PPSEQEGAVGGERPVPKYPPQEAEQLSHQ) is disordered. Zn(2+) is bound by residues C897 and H900. The interval 1111–1130 (EEGQEPGGMEDAQGPEPGQA) is disordered. An increases helicase activity about 5-fold (in a fragment starting at residue 427) region spans residues 1117–1208 (GGMEDAQGPE…ATEELLQVAR (92 aa)).

Belongs to the helicase family. RecQ subfamily. Interacts with UBR1 and UBR2. Interacts with MCM10; this interaction regulates RECQL4 unwinding activity. Interacts (via residues 1-54) with TOPBP1. Requires Zn(2+) as cofactor. As to expression, ubiquitously expressed, with highest levels in thymus and testis.

Its subcellular location is the cytoplasm. The protein resides in the nucleus. The catalysed reaction is Couples ATP hydrolysis with the unwinding of duplex DNA by translocating in the 3'-5' direction.. The enzyme catalyses ATP + H2O = ADP + phosphate + H(+). In terms of biological role, an ATP-dependent DNA helicase which unwinds dsDNA with a 3'-overhang in a 3'-5' direction. Does not unwind more than 18 bp of dsDNA. May modulate chromosome segregation. The N-terminal domain (residues 1-54) binds DNA Y-shaped DNA better than ss- or dsDNA. The core helicase domain binds ssDNA. The polypeptide is ATP-dependent DNA helicase Q4 (RECQL4) (Homo sapiens (Human)).